The chain runs to 212 residues: Sentrin-specific protease 8 (212 aa).

Position 1 is an N-acetylmethionine (Met1). A protease region spans residues 11–174; sequence SLLRQSDVSL…MYVICNTEAL (164 aa). Residues His102 and Asp119 contribute to the active site. Cys163 serves as the catalytic Nucleophile.

The protein belongs to the peptidase C48 family. Broadly expressed, with highest levels in kidney and pancreas.

Functionally, protease that catalyzes two essential functions in the NEDD8 pathway: processing of full-length NEDD8 to its mature form and deconjugation of NEDD8 from targeted proteins such as cullins or p53. The protein is Sentrin-specific protease 8 (SENP8) of Homo sapiens (Human).